A 272-amino-acid polypeptide reads, in one-letter code: Shikimate dehydrogenase (NADP(+)) (272 aa).

Shikimate-binding positions include 14–16 and threonine 61; that span reads SKS. The Proton acceptor role is filled by lysine 65. Glutamate 77 provides a ligand contact to NADP(+). Shikimate contacts are provided by asparagine 86 and aspartate 102. Residues 126-130, 149-154, and methionine 213 contribute to the NADP(+) site; these read GAGGA and NRTFSR. Tyrosine 215 is a binding site for shikimate. Residue glycine 237 coordinates NADP(+).

It belongs to the shikimate dehydrogenase family. As to quaternary structure, homodimer.

The catalysed reaction is shikimate + NADP(+) = 3-dehydroshikimate + NADPH + H(+). It participates in metabolic intermediate biosynthesis; chorismate biosynthesis; chorismate from D-erythrose 4-phosphate and phosphoenolpyruvate: step 4/7. Its function is as follows. Involved in the biosynthesis of the chorismate, which leads to the biosynthesis of aromatic amino acids. Catalyzes the reversible NADPH linked reduction of 3-dehydroshikimate (DHSA) to yield shikimate (SA). In Photorhabdus laumondii subsp. laumondii (strain DSM 15139 / CIP 105565 / TT01) (Photorhabdus luminescens subsp. laumondii), this protein is Shikimate dehydrogenase (NADP(+)).